Reading from the N-terminus, the 161-residue chain is MPSFDIVSKMNEVDLRNAVDNAVREVSTRFDFRGVEATIELKDLTVTLRSESDFQVRQLEDLFRNHCSKRNLSTSGVDIEDEPVHSGKFYTLTMTFKQGIDQPTAKEIVKYIKETKAKVQTSIQGDKVRVTGKKRDDLQETIALLKKSNIELPLQYENFRD.

It belongs to the YajQ family.

In terms of biological role, nucleotide-binding protein. This chain is Nucleotide-binding protein lpl1175, found in Legionella pneumophila (strain Lens).